A 160-amino-acid polypeptide reads, in one-letter code: NADH-quinone oxidoreductase subunit B (160 aa).

Cys37, Cys38, Cys102, and Cys132 together coordinate [4Fe-4S] cluster.

It belongs to the complex I 20 kDa subunit family. In terms of assembly, NDH-1 is composed of 14 different subunits. Subunits NuoB, C, D, E, F, and G constitute the peripheral sector of the complex. It depends on [4Fe-4S] cluster as a cofactor.

The protein localises to the cell inner membrane. It catalyses the reaction a quinone + NADH + 5 H(+)(in) = a quinol + NAD(+) + 4 H(+)(out). In terms of biological role, NDH-1 shuttles electrons from NADH, via FMN and iron-sulfur (Fe-S) centers, to quinones in the respiratory chain. Couples the redox reaction to proton translocation (for every two electrons transferred, four hydrogen ions are translocated across the cytoplasmic membrane), and thus conserves the redox energy in a proton gradient. This Neisseria gonorrhoeae (strain NCCP11945) protein is NADH-quinone oxidoreductase subunit B.